We begin with the raw amino-acid sequence, 34 residues long: U4-theraphotoxin-Hs1a (34 aa).

3 cysteine pairs are disulfide-bonded: Cys-3-Cys-17, Cys-10-Cys-22, and Cys-16-Cys-33.

The protein belongs to the neurotoxin 14 (magi-1) family. 05 (ICK-7) subfamily. In terms of tissue distribution, expressed by the venom gland.

It localises to the secreted. In terms of biological role, intracisternal injection paralyzes mice. The chain is U4-theraphotoxin-Hs1a from Cyriopagopus schmidti (Chinese bird spider).